The sequence spans 208 residues: MTDSYDKLLEKAKDVLSSSTKNIDRLKIPEPEIIREGKATIIRNFQDIIDIINRDPDQVIKFLTRELGTNIVQNGRRLIINKKVTLEELQEKMNEYINTYVRCYECGSLDTEIQKSGRVSLLVCKACGAQHPIHTVKEFKEEEGIEEGKEYTVEISEVGSSGEGRASFRGFTIFVPGTKKGETVKVKIKKIKNDVAIAEVVSRTSDKK.

A TRAM domain is found at 144 to 202 (GIEEGKEYTVEISEVGSSGEGRASFRGFTIFVPGTKKGETVKVKIKKIKNDVAIAEVVS).

Belongs to the eIF-2-beta/eIF-5 family. As to quaternary structure, heterotrimer composed of an alpha, a beta and a gamma chain.

EIF-2 functions in the early steps of protein synthesis by forming a ternary complex with GTP and initiator tRNA. This chain is Translation initiation factor 2 subunit beta (eif2b), found in Thermoplasma volcanium (strain ATCC 51530 / DSM 4299 / JCM 9571 / NBRC 15438 / GSS1).